A 132-amino-acid polypeptide reads, in one-letter code: Ragulator complex protein LAMTOR3 homolog (132 aa).

This sequence belongs to the LAMTOR3 family. Part of the Ragulator complex.

Regulator of the TOR pathway, a signaling cascade that promotes cell growth in response to growth factors, energy levels, and amino acids. May activate the TOR signaling cascade in response to amino acids. This is Ragulator complex protein LAMTOR3 homolog from Dictyostelium discoideum (Social amoeba).